Here is a 172-residue protein sequence, read N- to C-terminus: S-ribosylhomocysteine lyase (172 aa).

Fe cation-binding residues include His54, His58, and Cys128.

Belongs to the LuxS family. In terms of assembly, homodimer. Requires Fe cation as cofactor.

The enzyme catalyses S-(5-deoxy-D-ribos-5-yl)-L-homocysteine = (S)-4,5-dihydroxypentane-2,3-dione + L-homocysteine. In terms of biological role, involved in the synthesis of autoinducer 2 (AI-2) which is secreted by bacteria and is used to communicate both the cell density and the metabolic potential of the environment. The regulation of gene expression in response to changes in cell density is called quorum sensing. Catalyzes the transformation of S-ribosylhomocysteine (RHC) to homocysteine (HC) and 4,5-dihydroxy-2,3-pentadione (DPD). The protein is S-ribosylhomocysteine lyase of Photobacterium profundum (strain SS9).